Reading from the N-terminus, the 451-residue chain is tRNA-2-methylthio-N(6)-dimethylallyladenosine synthase (451 aa).

An MTTase N-terminal domain is found at 10–128 (KKFYTLTFGC…FPQLLEHVMQ (119 aa)). Cys-19, Cys-55, Cys-89, Cys-165, Cys-169, and Cys-172 together coordinate [4Fe-4S] cluster. A Radical SAM core domain is found at 151–381 (REDSIKAWVV…ISVQQEISEQ (231 aa)). A TRAM domain is found at 384–447 (KDLENTVQRI…SWNLYGEIFE (64 aa)).

This sequence belongs to the methylthiotransferase family. MiaB subfamily. In terms of assembly, monomer. The cofactor is [4Fe-4S] cluster.

The protein localises to the cytoplasm. It carries out the reaction N(6)-dimethylallyladenosine(37) in tRNA + (sulfur carrier)-SH + AH2 + 2 S-adenosyl-L-methionine = 2-methylsulfanyl-N(6)-dimethylallyladenosine(37) in tRNA + (sulfur carrier)-H + 5'-deoxyadenosine + L-methionine + A + S-adenosyl-L-homocysteine + 2 H(+). Catalyzes the methylthiolation of N6-(dimethylallyl)adenosine (i(6)A), leading to the formation of 2-methylthio-N6-(dimethylallyl)adenosine (ms(2)i(6)A) at position 37 in tRNAs that read codons beginning with uridine. The protein is tRNA-2-methylthio-N(6)-dimethylallyladenosine synthase of Natranaerobius thermophilus (strain ATCC BAA-1301 / DSM 18059 / JW/NM-WN-LF).